The sequence spans 557 residues: TBCC domain-containing protein 1 (557 aa).

In terms of domain architecture, C-CAP/cofactor C-like spans 290-435 (TTKRAKIACN…LEDHMARTGL (146 aa)).

The protein belongs to the TBCC family.

The protein localises to the cytoplasm. It localises to the cytoskeleton. Its subcellular location is the microtubule organizing center. It is found in the centrosome. The protein resides in the spindle pole. Its function is as follows. Plays a role in the regulation of centrosome and Golgi apparatus positioning, with consequences on cell shape and cell migration. The polypeptide is TBCC domain-containing protein 1 (TBCCD1) (Bos taurus (Bovine)).